A 177-amino-acid polypeptide reads, in one-letter code: ATP synthase subunit delta (177 aa).

This sequence belongs to the ATPase delta chain family. F-type ATPases have 2 components, F(1) - the catalytic core - and F(0) - the membrane proton channel. F(1) has five subunits: alpha(3), beta(3), gamma(1), delta(1), epsilon(1). F(0) has three main subunits: a(1), b(2) and c(10-14). The alpha and beta chains form an alternating ring which encloses part of the gamma chain. F(1) is attached to F(0) by a central stalk formed by the gamma and epsilon chains, while a peripheral stalk is formed by the delta and b chains.

It localises to the cell inner membrane. In terms of biological role, f(1)F(0) ATP synthase produces ATP from ADP in the presence of a proton or sodium gradient. F-type ATPases consist of two structural domains, F(1) containing the extramembraneous catalytic core and F(0) containing the membrane proton channel, linked together by a central stalk and a peripheral stalk. During catalysis, ATP synthesis in the catalytic domain of F(1) is coupled via a rotary mechanism of the central stalk subunits to proton translocation. This protein is part of the stalk that links CF(0) to CF(1). It either transmits conformational changes from CF(0) to CF(1) or is implicated in proton conduction. The protein is ATP synthase subunit delta of Shigella flexneri.